A 120-amino-acid polypeptide reads, in one-letter code: Ribosome-binding factor A (120 aa).

The protein belongs to the RbfA family. In terms of assembly, monomer. Binds 30S ribosomal subunits, but not 50S ribosomal subunits or 70S ribosomes.

It localises to the cytoplasm. One of several proteins that assist in the late maturation steps of the functional core of the 30S ribosomal subunit. Associates with free 30S ribosomal subunits (but not with 30S subunits that are part of 70S ribosomes or polysomes). Required for efficient processing of 16S rRNA. May interact with the 5'-terminal helix region of 16S rRNA. The chain is Ribosome-binding factor A from Rickettsia conorii (strain ATCC VR-613 / Malish 7).